The primary structure comprises 521 residues: Probable cytosol aminopeptidase (521 aa).

Residues Lys-268 and Asp-273 each contribute to the Mn(2+) site. Residue Lys-280 is part of the active site. Mn(2+) is bound by residues Asp-291, Asp-350, and Glu-352. Arg-354 is a catalytic residue.

The protein belongs to the peptidase M17 family. Mn(2+) serves as cofactor.

It localises to the cytoplasm. The enzyme catalyses Release of an N-terminal amino acid, Xaa-|-Yaa-, in which Xaa is preferably Leu, but may be other amino acids including Pro although not Arg or Lys, and Yaa may be Pro. Amino acid amides and methyl esters are also readily hydrolyzed, but rates on arylamides are exceedingly low.. It catalyses the reaction Release of an N-terminal amino acid, preferentially leucine, but not glutamic or aspartic acids.. Presumably involved in the processing and regular turnover of intracellular proteins. Catalyzes the removal of unsubstituted N-terminal amino acids from various peptides. The protein is Probable cytosol aminopeptidase of Chromobacterium violaceum (strain ATCC 12472 / DSM 30191 / JCM 1249 / CCUG 213 / NBRC 12614 / NCIMB 9131 / NCTC 9757 / MK).